The chain runs to 860 residues: Transforming growth factor-beta receptor-associated protein 1 (860 aa).

The CNH domain maps to 24-297 (RVNIECVECC…HILQDFEGRV (274 aa)). The CHCR repeat unit spans residues 564–728 (RPLDEQQKNS…LLAIYLHAGP (165 aa)).

It belongs to the TRAP1 family. In terms of assembly, interacts with TGFBR2 and ACVR2B; in the absence of ligand stimulation. Interacts with TGFBR1, ACVRL1, BMPR1A and ACVR1B; in the absence of ligand stimulation and to a less extent. Interacts with SMAD4; the interaction seems to be mutually exclusive with the interaction of SMAD4 and phosphorylated SMAD2. May interact with ALOX5. Interacts with RAB5C. Interacts with VPS8, VPS11 and VPS16. Component of the putative class C core vacuole/endosome tethering (CORVET) complex; the core of which composed of the class C Vps proteins VPS11, VPS16, VPS18 and VPS33A, is associated with VPS8 and TGFBRAP1.

The protein localises to the cytoplasm. It localises to the early endosome. In terms of biological role, plays a role in the TGF-beta/activin signaling pathway. It associates with inactive heteromeric TGF-beta and activin receptor complexes, mainly through the type II receptor, and is released upon activation of signaling. May recruit SMAD4 to the vicinity of the receptor complex and facilitate its interaction with receptor-regulated Smads, such as SMAD2. Plays a role in vesicle-mediated protein trafficking of the endocytic membrane transport pathway. Believed to act as a component of the putative CORVET endosomal tethering complexes which is proposed to be involved in the Rab5-to-Rab7 endosome conversion probably implicating MON1A/B, and via binding SNAREs and SNARE complexes to mediate tethering and docking events during SNARE-mediated membrane fusion. The CORVET complex is proposed to function as a Rab5 effector to mediate early endosome fusion probably in specific endosome subpopulations. Functions predominantly in APPL1-containing endosomes and in degradative but not recycling trafficking of endocytosed cargo. The chain is Transforming growth factor-beta receptor-associated protein 1 (TGFBRAP1) from Homo sapiens (Human).